We begin with the raw amino-acid sequence, 213 residues long: Phosphoribosylformylglycinamidine synthase subunit PurQ (213 aa).

The 209-residue stretch at 5 to 213 (ACVVVYPGSN…FQSILNYLKR (209 aa)) folds into the Glutamine amidotransferase type-1 domain. Cysteine 86 (nucleophile) is an active-site residue. Active-site residues include histidine 186 and glutamate 188.

In terms of assembly, part of the FGAM synthase complex composed of 1 PurL, 1 PurQ and 2 PurS subunits.

The protein localises to the cytoplasm. It catalyses the reaction N(2)-formyl-N(1)-(5-phospho-beta-D-ribosyl)glycinamide + L-glutamine + ATP + H2O = 2-formamido-N(1)-(5-O-phospho-beta-D-ribosyl)acetamidine + L-glutamate + ADP + phosphate + H(+). The catalysed reaction is L-glutamine + H2O = L-glutamate + NH4(+). Its pathway is purine metabolism; IMP biosynthesis via de novo pathway; 5-amino-1-(5-phospho-D-ribosyl)imidazole from N(2)-formyl-N(1)-(5-phospho-D-ribosyl)glycinamide: step 1/2. Functionally, part of the phosphoribosylformylglycinamidine synthase complex involved in the purines biosynthetic pathway. Catalyzes the ATP-dependent conversion of formylglycinamide ribonucleotide (FGAR) and glutamine to yield formylglycinamidine ribonucleotide (FGAM) and glutamate. The FGAM synthase complex is composed of three subunits. PurQ produces an ammonia molecule by converting glutamine to glutamate. PurL transfers the ammonia molecule to FGAR to form FGAM in an ATP-dependent manner. PurS interacts with PurQ and PurL and is thought to assist in the transfer of the ammonia molecule from PurQ to PurL. The sequence is that of Phosphoribosylformylglycinamidine synthase subunit PurQ from Thermotoga maritima (strain ATCC 43589 / DSM 3109 / JCM 10099 / NBRC 100826 / MSB8).